A 205-amino-acid polypeptide reads, in one-letter code: Putative C-type lectin protein FPV001/FPV260 (205 aa).

A C-type lectin domain is found at 84-187 (CPRDWISHNG…CSVRRYLVCK (104 aa)).

The chain is Putative C-type lectin protein FPV001/FPV260 from Fowlpox virus (strain NVSL) (FPV).